Reading from the N-terminus, the 548-residue chain is Isocitrate dehydrogenase [NAD(+)] 1, mitochondrial (548 aa).

The transit peptide at 1–53 (MSSLSTLRILHSTAGRRWASYYGIYPKSAACSSSSVAIARFFSTAADRPPKHA) directs the protein to the mitochondrion. NAD(+)-binding positions include 132–134 (TIT) and asparagine 153. D-threo-isocitrate is bound by residues 151–157 (SPNGAMR), arginine 187, tyrosine 194, lysine 266, aspartate 311, and aspartate 335. Mg(2+) is bound by residues aspartate 311, aspartate 335, and aspartate 339. NAD(+)-binding positions include 372-377 (HGTVSD) and asparagine 391. The EF-hand domain occupies 499 to 534 (IDEEAINGLFQKYDKNGDGFIDFEEFTRMLVKMNLA). Residues aspartate 512, asparagine 514, aspartate 516, phenylalanine 518, and glutamate 523 each contribute to the Ca(2+) site.

Belongs to the isocitrate and isopropylmalate dehydrogenases family. In terms of assembly, homodimer. It depends on Mg(2+) as a cofactor. Mn(2+) serves as cofactor.

The protein localises to the mitochondrion. The catalysed reaction is D-threo-isocitrate + NAD(+) = 2-oxoglutarate + CO2 + NADH. The homodimer exhibits allosteric regulation by isocitrate. Activated by Mn(2+) and Mg(2+). No activation by Na(+), K(+) or Li(+). Inhibited by Co(2+), Cu(2+) and Ni(2+), but not with Ca(2+) in the presence of Mn(2+) or Mg(2+). Competitively inhibited by NADH, but no effect on activity by 1.0 mM citrate. Strongly inhibited by excess ATP, ADP, AMP and alpha-ketoglutarate. Functionally, performs an essential role in the oxidative function of the tricarboxylic acid cycle and respiration. Catalyzes the decarboxylation of isocitrate to produce 2-oxoglutarate and generate NADH to provide electrons for energy production. No activity with NADP(+). This is Isocitrate dehydrogenase [NAD(+)] 1, mitochondrial from Phaeodactylum tricornutum (strain CCAP 1055/1).